Here is a 414-residue protein sequence, read N- to C-terminus: 3-isopropylmalate dehydratase large subunit (414 aa).

3 residues coordinate [4Fe-4S] cluster: Cys295, Cys353, and Cys356.

Belongs to the aconitase/IPM isomerase family. LeuC type 2 subfamily. In terms of assembly, heterodimer of LeuC and LeuD. [4Fe-4S] cluster is required as a cofactor.

The catalysed reaction is (2R,3S)-3-isopropylmalate = (2S)-2-isopropylmalate. The protein operates within amino-acid biosynthesis; L-leucine biosynthesis; L-leucine from 3-methyl-2-oxobutanoate: step 2/4. Catalyzes the isomerization between 2-isopropylmalate and 3-isopropylmalate, via the formation of 2-isopropylmaleate. This chain is 3-isopropylmalate dehydratase large subunit, found in Pyrobaculum islandicum (strain DSM 4184 / JCM 9189 / GEO3).